The sequence spans 507 residues: Aldehyde dehydrogenase 1, mitochondrial (507 aa).

The N-terminal 21 residues, Met1 to Leu21, are a transit peptide targeting the mitochondrion. Gly266 to Gly271 serves as a coordination point for NAD(+). Catalysis depends on residues Glu289 and Cys323.

Belongs to the aldehyde dehydrogenase family. Homotetramer.

Its subcellular location is the mitochondrion matrix. It catalyses the reaction an aldehyde + NAD(+) + H2O = a carboxylate + NADH + 2 H(+). Its pathway is alcohol metabolism; ethanol degradation; acetate from ethanol: step 2/2. The polypeptide is Aldehyde dehydrogenase 1, mitochondrial (ALD1) (Saccharomyces cerevisiae (Baker's yeast)).